Consider the following 279-residue polypeptide: MTTRIDTKFAELKAEGRPALVTYFMGGDPDLETALKVMKALPKAGADVIELGMPFSDPMADGPAIQAAGLRPLNAGQTLAKTLYMAAEFRKEDDTTPIVMMGYYNPIYVYGVERFLTDAKASGVDGLIVVDLPSEMDAELCIPAMKAGINFIRLTTPTTDDKRLPKVLHNSSGFVYYVSMNGITGAAIADTAKVGEAVRHIKKSTDLPICVGFGVKTPEQAAAIATHADGVVVGTAIVNAIAGELDEKGKVKGDPVAAATRLVHALAESVRATRLEAAQ.

Active-site proton acceptor residues include Glu-50 and Asp-61.

Belongs to the TrpA family. Tetramer of two alpha and two beta chains.

The catalysed reaction is (1S,2R)-1-C-(indol-3-yl)glycerol 3-phosphate + L-serine = D-glyceraldehyde 3-phosphate + L-tryptophan + H2O. Its pathway is amino-acid biosynthesis; L-tryptophan biosynthesis; L-tryptophan from chorismate: step 5/5. Its function is as follows. The alpha subunit is responsible for the aldol cleavage of indoleglycerol phosphate to indole and glyceraldehyde 3-phosphate. The protein is Tryptophan synthase alpha chain of Brucella ovis (strain ATCC 25840 / 63/290 / NCTC 10512).